A 209-amino-acid polypeptide reads, in one-letter code: Large ribosomal subunit protein bL25 (209 aa).

Residues 190-209 (GLKSADDEAEGEDAEEAAAE) are disordered. Over residues 196–209 (DEAEGEDAEEAAAE) the composition is skewed to acidic residues.

It belongs to the bacterial ribosomal protein bL25 family. CTC subfamily. As to quaternary structure, part of the 50S ribosomal subunit; part of the 5S rRNA/L5/L18/L25 subcomplex. Contacts the 5S rRNA. Binds to the 5S rRNA independently of L5 and L18.

Its function is as follows. This is one of the proteins that binds to the 5S RNA in the ribosome where it forms part of the central protuberance. The sequence is that of Large ribosomal subunit protein bL25 from Ruegeria sp. (strain TM1040) (Silicibacter sp.).